The sequence spans 1309 residues: Lysine-specific demethylase 2B (1309 aa).

Serine 26 carries the post-translational modification Phosphoserine. A JmjC domain is found at 147 to 315 (FSHTKLEHLV…MQLRIYEIED (169 aa)). Threonine 208 serves as a coordination point for substrate. Residues histidine 211 and aspartate 213 each coordinate Fe cation. Lysine 228 contacts substrate. Histidine 283 serves as a coordination point for Fe cation. A compositionally biased stretch (acidic residues) spans 378–403 (DMEEESCEQQPQEEEEEEEDKEEEGD). The tract at residues 378–476 (DMEEESCEQQ…PTGSPATEVS (99 aa)) is disordered. A compositionally biased stretch (basic and acidic residues) spans 404–413 (GADKTPKPPT). The segment covering 415–424 (DPTSPTSTPP) has biased composition (low complexity). A phosphoserine mark is found at serine 447 and serine 450. Residue threonine 466 is modified to Phosphothreonine. Residues 467–476 (PTGSPATEVS) are compositionally biased toward polar residues. Serine 470 is modified (phosphoserine). A CXXC-type zinc finger spans residues 579 to 625 (ARRRRTRCRKCEACLRTECGECHFCKDMKKFGGPGRMKQSCIMRQCI). Zn(2+)-binding residues include cysteine 586, cysteine 589, cysteine 592, cysteine 597, cysteine 600, cysteine 603, cysteine 619, cysteine 624, cysteine 635, cysteine 638, cysteine 661, cysteine 664, histidine 669, cysteine 672, cysteine 692, and cysteine 695. Residues 632 to 698 (TAVCLVCGEA…CWECPKCNHA (67 aa)) form a PHD-type zinc finger. Disordered stretches follow at residues 700 to 816 (KTGK…SLSP) and 828 to 1005 (QLKP…SASP). The segment covering 722-772 (KEQKMNRDNKEGQEPAKRRSECEEAPRRRSDEHPKKVPADGILRRKSDDVH) has biased composition (basic and acidic residues). The span at 792-816 (SSLQTSPGSSSHLSPRPPLGSSLSP) shows a compositional bias: low complexity. Glycyl lysine isopeptide (Lys-Gly) (interchain with G-Cter in SUMO2) cross-links involve residues lysine 830 and lysine 863. A compositionally biased stretch (polar residues) spans 883-892 (SRSSSPTAGP). Basic residues predominate over residues 905 to 914 (KVKMRRKRRL). Basic and acidic residues predominate over residues 915–933 (VNKELSKELSKELNHEIQK). A coiled-coil region spans residues 916–944 (NKELSKELSKELNHEIQKTESTLAHESQQ). Residue serine 924 is modified to Phosphoserine. Polar residues predominate over residues 934–946 (TESTLAHESQQPI). Phosphoserine is present on residues serine 948 and serine 952. The segment covering 955-968 (DEPKRPLSHCERPH) has biased composition (basic and acidic residues). Phosphoserine occurs at positions 991 and 1004. Residues 1032-1078 (DGAAHVMHREVWMAVFSYLSHRDLCVCMRVCRTWNRWCCDKRLWTRI) form the F-box domain. LRR repeat units follow at residues 1106–1127 (WTNI…LRDL), 1129–1155 (LSGC…DVQW), 1195–1220 (GLDI…QLSY), 1221–1250 (CNHI…NLSD), 1251–1275 (CNKV…DLRY), and 1276–1309 (CKQV…QKLS).

Belongs to the JHDM1 histone demethylase family. In terms of assembly, interacts with SKP1, forming heterodimers. The KDM2B-SKP1 heterodimeric complex interacts with the PCGF1-BCORL heterodimeric complex to form a homotetrameric polycomb repression complex 1 (PRC1.1). Directly interacts with CUL1. The SKP1-KDM2B interacts with UBB. The cofactor is Fe(2+).

It is found in the nucleus. It localises to the nucleolus. The protein resides in the chromosome. The enzyme catalyses N(6),N(6)-dimethyl-L-lysyl(36)-[histone H3] + 2 2-oxoglutarate + 2 O2 = L-lysyl(36)-[histone H3] + 2 formaldehyde + 2 succinate + 2 CO2. Histone demethylase activity is inhibited by fumarate. Functionally, histone demethylase that demethylates 'Lys-4' and 'Lys-36' of histone H3, thereby playing a central role in histone code. Preferentially demethylates trimethylated H3 'Lys-4' and dimethylated H3 'Lys-36' residue while it has weak or no activity for mono- and tri-methylated H3 'Lys-36'. Preferentially binds the transcribed region of ribosomal RNA and represses the transcription of ribosomal RNA genes which inhibits cell growth and proliferation. May also serve as a substrate-recognition component of the SCF (SKP1-CUL1-F-box protein)-type E3 ubiquitin ligase complex. The protein is Lysine-specific demethylase 2B (Kdm2b) of Mus musculus (Mouse).